We begin with the raw amino-acid sequence, 447 residues long: GTPase Der (447 aa).

EngA-type G domains are found at residues 4–165 (QIIA…PKEK) and 180–357 (VQIV…KNWN). Residues 10–17 (GRPNVGKS), 57–61 (DTPGL), 119–122 (NKCE), 186–193 (GRPNAGKS), 233–237 (DTAGL), and 298–301 (NKWD) each bind GTP. Positions 358–443 (KKITTSKLNE…PIRFAYVKTK (86 aa)) constitute a KH-like domain.

Belongs to the TRAFAC class TrmE-Era-EngA-EngB-Septin-like GTPase superfamily. EngA (Der) GTPase family. As to quaternary structure, associates with the 50S ribosomal subunit.

GTPase that plays an essential role in the late steps of ribosome biogenesis. The polypeptide is GTPase Der (Rickettsia canadensis (strain McKiel)).